Consider the following 455-residue polypeptide: F-box/LRR-repeat protein At5g35995 (455 aa).

The F-box domain occupies 4 to 51 (RDFISSLPDEVLGKKILSLLPTKLVVSTSVLSKRWRNLFHFVDSFDLE). LRR repeat units follow at residues 114-138 (DHYL…SYRT), 152-176 (FPAL…LISG), 282-305 (IRNV…CYTM), 308-324 (FDKL…ENGW), and 325-348 (QALP…LLHK).

In Arabidopsis thaliana (Mouse-ear cress), this protein is F-box/LRR-repeat protein At5g35995.